The chain runs to 938 residues: Translation initiation factor IF-2 (938 aa).

The span at 57–205 (DKSKKVASKE…PKSEETKSEE (149 aa)) shows a compositional bias: basic and acidic residues. The disordered stretch occupies residues 57–350 (DKSKKVASKE…RSADDLAQQE (294 aa)). The segment covering 206 to 215 (TTEGGESEEK) has biased composition (acidic residues). Residues 248-259 (KKEEKKEDDKKD) show a composition bias toward basic and acidic residues. Basic residues-rich tracts occupy residues 260–270 (KDRRKKRRRRI) and 285–296 (GAKKGGRTRSKP). A compositionally biased stretch (basic and acidic residues) spans 297–319 (ITKEEPTEEEVQKQVRETLEKLQ). The segment covering 323–333 (SKGKGAKYRRQ) has biased composition (basic residues). Over residues 334–344 (KRDEHRQRSAD) the composition is skewed to basic and acidic residues. A tr-type G domain is found at 434-602 (TRAPIVTVMG…KVLLEAEILE (169 aa)). The tract at residues 443-450 (GHVDHGKT) is G1. GTP is bound at residue 443–450 (GHVDHGKT). Residues 468–472 (GITQH) are G2. Positions 490 to 493 (DTPG) are G3. Residues 490–494 (DTPGH) and 544–547 (NKSD) contribute to the GTP site. The interval 544-547 (NKSD) is G4. Positions 580–582 (SAK) are G5.

The protein belongs to the TRAFAC class translation factor GTPase superfamily. Classic translation factor GTPase family. IF-2 subfamily.

The protein localises to the cytoplasm. One of the essential components for the initiation of protein synthesis. Protects formylmethionyl-tRNA from spontaneous hydrolysis and promotes its binding to the 30S ribosomal subunits. Also involved in the hydrolysis of GTP during the formation of the 70S ribosomal complex. This Christiangramia forsetii (strain DSM 17595 / CGMCC 1.15422 / KT0803) (Gramella forsetii) protein is Translation initiation factor IF-2.